The chain runs to 398 residues: Bifunctional enzyme IspD/IspF (398 aa).

The tract at residues 1-234 (MTNSPRTAAI…SRLMAALGDI (234 aa)) is 2-C-methyl-D-erythritol 4-phosphate cytidylyltransferase. A 2-C-methyl-D-erythritol 2,4-cyclodiphosphate synthase region spans residues 235 to 398 (RTGTGYDVHA…LPWGADGLAG (164 aa)). A divalent metal cation contacts are provided by aspartate 241 and histidine 243. Residues 241-243 (DVH) and 267-268 (HS) contribute to the 4-CDP-2-C-methyl-D-erythritol 2-phosphate site. Residue histidine 275 coordinates a divalent metal cation. 4-CDP-2-C-methyl-D-erythritol 2-phosphate is bound by residues 289 to 291 (DIG), 365 to 368 (TTSE), phenylalanine 372, and arginine 375.

This sequence in the N-terminal section; belongs to the IspD/TarI cytidylyltransferase family. IspD subfamily. The protein in the C-terminal section; belongs to the IspF family. A divalent metal cation serves as cofactor.

The catalysed reaction is 2-C-methyl-D-erythritol 4-phosphate + CTP + H(+) = 4-CDP-2-C-methyl-D-erythritol + diphosphate. It carries out the reaction 4-CDP-2-C-methyl-D-erythritol 2-phosphate = 2-C-methyl-D-erythritol 2,4-cyclic diphosphate + CMP. Its pathway is isoprenoid biosynthesis; isopentenyl diphosphate biosynthesis via DXP pathway; isopentenyl diphosphate from 1-deoxy-D-xylulose 5-phosphate: step 2/6. The protein operates within isoprenoid biosynthesis; isopentenyl diphosphate biosynthesis via DXP pathway; isopentenyl diphosphate from 1-deoxy-D-xylulose 5-phosphate: step 4/6. Bifunctional enzyme that catalyzes the formation of 4-diphosphocytidyl-2-C-methyl-D-erythritol from CTP and 2-C-methyl-D-erythritol 4-phosphate (MEP) (IspD), and catalyzes the conversion of 4-diphosphocytidyl-2-C-methyl-D-erythritol 2-phosphate (CDP-ME2P) to 2-C-methyl-D-erythritol 2,4-cyclodiphosphate (ME-CPP) with a corresponding release of cytidine 5-monophosphate (CMP) (IspF). The chain is Bifunctional enzyme IspD/IspF from Rhodopseudomonas palustris (strain ATCC BAA-98 / CGA009).